Here is a 202-residue protein sequence, read N- to C-terminus: Small ribosomal subunit protein uS4c (202 aa).

The S4 RNA-binding domain occupies M90–I153.

It belongs to the universal ribosomal protein uS4 family. Part of the 30S ribosomal subunit. Contacts protein S5. The interaction surface between S4 and S5 is involved in control of translational fidelity.

The protein resides in the plastid. The protein localises to the chloroplast. Its function is as follows. One of the primary rRNA binding proteins, it binds directly to 16S rRNA where it nucleates assembly of the body of the 30S subunit. Functionally, with S5 and S12 plays an important role in translational accuracy. The sequence is that of Small ribosomal subunit protein uS4c (rps4) from Hypopterygium laricinum (Moss).